The following is a 385-amino-acid chain: Flap endonuclease 1 (385 aa).

Positions 1–105 (MGIKGLNAII…HELSKRSARR (105 aa)) are N-domain. Position 34 (Asp34) interacts with Mg(2+). Residues Arg47 and Arg71 each contribute to the DNA site. Asp87, Glu156, Glu158, Asp177, and Asp179 together coordinate Mg(2+). The I-domain stretch occupies residues 120–251 (EKLKHERRLV…VTALKLIKEH (132 aa)). A DNA-binding site is contributed by Glu156. 2 residues coordinate DNA: Gly229 and Asp231. Asp231 serves as a coordination point for Mg(2+). An interaction with PCNA region spans residues 338-346 (VQGRLDGFF). A compositionally biased stretch (low complexity) spans 356–370 (LAAANAKAKSTKAGK). The interval 356–385 (LAAANAKAKSTKAGKQATKGKVGKPGRPRK) is disordered. Over residues 376–385 (KVGKPGRPRK) the composition is skewed to basic residues.

This sequence belongs to the XPG/RAD2 endonuclease family. FEN1 subfamily. As to quaternary structure, interacts with PCNA. Three molecules of FEN1 bind to one PCNA trimer with each molecule binding to one PCNA monomer. PCNA stimulates the nuclease activity without altering cleavage specificity. Mg(2+) is required as a cofactor. In terms of processing, phosphorylated. Phosphorylation upon DNA damage induces relocalization to the nuclear plasma.

It is found in the nucleus. The protein resides in the nucleolus. Its subcellular location is the nucleoplasm. The protein localises to the mitochondrion. Its function is as follows. Structure-specific nuclease with 5'-flap endonuclease and 5'-3' exonuclease activities involved in DNA replication and repair. During DNA replication, cleaves the 5'-overhanging flap structure that is generated by displacement synthesis when DNA polymerase encounters the 5'-end of a downstream Okazaki fragment. It enters the flap from the 5'-end and then tracks to cleave the flap base, leaving a nick for ligation. Also involved in the long patch base excision repair (LP-BER) pathway, by cleaving within the apurinic/apyrimidinic (AP) site-terminated flap. Acts as a genome stabilization factor that prevents flaps from equilibrating into structures that lead to duplications and deletions. Also possesses 5'-3' exonuclease activity on nicked or gapped double-stranded DNA, and exhibits RNase H activity. Also involved in replication and repair of rDNA and in repairing mitochondrial DNA. The sequence is that of Flap endonuclease 1 from Lachancea thermotolerans (strain ATCC 56472 / CBS 6340 / NRRL Y-8284) (Yeast).